A 365-amino-acid polypeptide reads, in one-letter code: sn-glycerol-3-phosphate import ATP-binding protein UgpC (365 aa).

Residues 4–234 enclose the ABC transporter domain; it reads LSLRNVQKHY…PASTFVAGFI (231 aa). ATP is bound at residue 36-43; the sequence is GPSGCGKS.

This sequence belongs to the ABC transporter superfamily. sn-glycerol-3-phosphate importer (TC 3.A.1.1.3) family. In terms of assembly, the complex is composed of two ATP-binding proteins (UgpC), two transmembrane proteins (UgpA and UgpE) and a solute-binding protein (UgpB).

It is found in the cell inner membrane. It catalyses the reaction sn-glycerol 3-phosphate(out) + ATP + H2O = sn-glycerol 3-phosphate(in) + ADP + phosphate + H(+). Part of the ABC transporter complex UgpBAEC involved in sn-glycerol-3-phosphate (G3P) import. Responsible for energy coupling to the transport system. In Ralstonia nicotianae (strain ATCC BAA-1114 / GMI1000) (Ralstonia solanacearum), this protein is sn-glycerol-3-phosphate import ATP-binding protein UgpC.